A 407-amino-acid polypeptide reads, in one-letter code: Indoleamine 2,3-dioxygenase 1 (407 aa).

His-350 contacts heme b. A disordered region spans residues 362-388; that stretch reads SKQKPMGGHKSEEPSNTENRGTGGTDV.

It belongs to the indoleamine 2,3-dioxygenase family. As to quaternary structure, monomer. It depends on heme b as a cofactor.

It localises to the cytoplasm. It is found in the cytosol. The catalysed reaction is D-tryptophan + O2 = N-formyl-D-kynurenine. It carries out the reaction L-tryptophan + O2 = N-formyl-L-kynurenine. With respect to regulation, activity is inhibited by and MTH-trp (methylthiohydantoin-DL-tryptophan), modestly inhibited by L-1MT (1-methyl-L-tryptophan) but not D-1MT (1-methyl-D-tryptophan). Its function is as follows. Catalyzes the first and rate limiting step of the catabolism of the essential amino acid tryptophan along the kynurenine pathway. Involved in the peripheral immune tolerance, contributing to maintain homeostasis by preventing autoimmunity or immunopathology that would result from uncontrolled and overreacting immune responses. Tryptophan shortage inhibits T lymphocytes division and accumulation of tryptophan catabolites induces T-cell apoptosis and differentiation of regulatory T-cells. Acts as a suppressor of anti-tumor immunity. Limits the growth of intracellular pathogens by depriving tryptophan. Protects the fetus from maternal immune rejection. The chain is Indoleamine 2,3-dioxygenase 1 from Rattus norvegicus (Rat).